The sequence spans 1079 residues: MEDEAALDRGASFLKHVCDEEEVEGHHTIYIGVHVPKSYRRRRRHKRKAGHREKKEKERVSENYSDKSDVENADESSSSILKPLISPAAERIRFILGEEDDSPAPPQLFTELDELLAVDGQEMEWKETARWIKFEEKVEQGGERWSKPHVATLSLHSLFELRTCMEKGSIMLDREAASLPQLVEMIVDHQIETGLLKPDLKDKVTYTLLRKHRHQTKKSNLRSLADIGKTVSSASRMFTSPENGSPAMTHRNLTSSSLNDISDKPEKDQLKNKFMKKLPRDAEASNVLVGEVDFLDSPFIAFVRLQQAVMLGALTEVPVPTRFLFILLGPKGKAKSYHEIGRAIATLMSDEVFHDIAYKAKDRQDLIAGIDEFLDEVIVLPPGEWDPAIRIEPPKSLPSSDKRKNMYSGGENVQMNGDTPHDGGHGGGGHADCEELQRTGRFCGGLIKDIKRKAPFFASDFYDALNIQALSAILFIYLATVTNAITFGGLLGDATDNMQGVLESFLGTAVSGAVFCLFAGQPLTILSSTGPVLVFERLLFNFSKDHNFDYLEFRLWIGLWSAFLCLILVATDASFLVQYFTRFTEEGFSSLISFIFIYDAFKKMIKLADYYPINSNFKVGYNTQFSCVCVPPNPVNISVSNDTTLAPEDLQTVSSADMYHNATFDWALLTKKECLKYEGKLVGNNCDFVPDITLMSFILFLGTYTSSMALKKFKTSRYFPTTARKLISDFAIILSILIFCVIDALVGVDTPKLIVPSEFKPTSPNRGWFVPPFGGNPWWVYLAAAIPALLVTILIFMDQQITAVIVNRKEHKLKKGAGYHLDLFWVAILMVVCSFMALPWYVAATVISIAHIDSLKMETETSAPGEQPKFLGVREQRVTGTLVFILTGLSVFMAPILKFIPMPVLYGVFLYMGVASLNGVQFMDRLKLLLMPLKHQPDFIYLRHVPLRRVHLFTFLQVLCLALLWILKSTVAAIIFPVMILALVAVRKGMDYLFSQHDLSFLDDVIPEKDKKKKEDEKKKKKKKGSLDSDSDDSDCPYSEKVPSIKIPMDIMEQQPFLSDSKPSDRERSPTFLERHTSC.

The segment at 1–62 (MEDEAALDRG…EKKEKERVSE (62 aa)) is required for interaction with AHCYL1. The Cytoplasmic segment spans residues 1–466 (MEDEAALDRG…FASDFYDALN (466 aa)). At tyrosine 30 the chain carries Phosphotyrosine. Residues 39–52 (YRRRRRHKRKAGHR) show a composition bias toward basic residues. The tract at residues 39–78 (YRRRRRHKRKAGHREKKEKERVSENYSDKSDVENADESSS) is disordered. The span at 53–70 (EKKEKERVSENYSDKSDV) shows a compositional bias: basic and acidic residues. Serine 61, serine 65, serine 68, serine 223, serine 232, serine 233, and serine 245 each carry phosphoserine. The segment at 238-265 (FTSPENGSPAMTHRNLTSSSLNDISDKP) is disordered. 2 positions are modified to phosphothreonine: threonine 249 and threonine 254. A compositionally biased stretch (polar residues) spans 251-260 (RNLTSSSLND). Phosphoserine occurs at positions 256, 257, and 262. A helical transmembrane segment spans residues 467 to 491 (IQALSAILFIYLATVTNAITFGGLL). At 492–501 (GDATDNMQGV) the chain is on the extracellular side. A helical transmembrane segment spans residues 502–520 (LESFLGTAVSGAVFCLFAG). A topological domain (cytoplasmic) is located at residue glutamine 521. A discontinuously helical membrane pass occupies residues 522–542 (PLTILSSTGPVLVFERLLFNF). The Extracellular segment spans residues 543-550 (SKDHNFDY). Residues 551-571 (LEFRLWIGLWSAFLCLILVAT) traverse the membrane as a helical segment. Residues 572 to 585 (DASFLVQYFTRFTE) are Cytoplasmic-facing. Residues 586 to 609 (EGFSSLISFIFIYDAFKKMIKLAD) form a helical membrane-spanning segment. Over 610–692 (YYPINSNFKV…GNNCDFVPDI (83 aa)) the chain is Extracellular. A helical transmembrane segment spans residues 693-710 (TLMSFILFLGTYTSSMAL). Over 711-725 (KKFKTSRYFPTTARK) the chain is Cytoplasmic. The helical transmembrane segment at 726–745 (LISDFAIILSILIFCVIDAL) threads the bilayer. The Extracellular portion of the chain corresponds to 746–779 (VGVDTPKLIVPSEFKPTSPNRGWFVPPFGGNPWW). An interaction with CA4 region spans residues 748–779 (VDTPKLIVPSEFKPTSPNRGWFVPPFGGNPWW). A helical transmembrane segment spans residues 780 to 807 (VYLAAAIPALLVTILIFMDQQITAVIVN). The Cytoplasmic portion of the chain corresponds to 808–819 (RKEHKLKKGAGY). Residues 820–836 (HLDLFWVAILMVVCSFM) traverse the membrane as a helical segment. A topological domain (extracellular) is located at residue alanine 837. A discontinuously helical transmembrane segment spans residues 838–855 (LPWYVAATVISIAHIDSL). The Cytoplasmic portion of the chain corresponds to 856 to 877 (KMETETSAPGEQPKFLGVREQR). Residues 878 to 894 (VTGTLVFILTGLSVFMA) form a helical membrane-spanning segment. Topologically, residues 895–901 (PILKFIP) are extracellular. The chain crosses the membrane as a helical span at residues 902–918 (MPVLYGVFLYMGVASLN). Topologically, residues 919–960 (GVQFMDRLKLLLMPLKHQPDFIYLRHVPLRRVHLFTFLQVLC) are cytoplasmic. The discontinuously helical intramembrane region spans 961-986 (LALLWILKSTVAAIIFPVMILALVAV). The Cytoplasmic segment spans residues 987-1079 (RKGMDYLFSQ…PTFLERHTSC (93 aa)). The CA2-binding stretch occupies residues 1002–1004 (LDD). Positions 1012–1079 (KKKEDEKKKK…PTFLERHTSC (68 aa)) are disordered. Residue serine 1026 is modified to Phosphoserine; by PKA. The residue at position 1029 (serine 1029) is a Phosphoserine. Positions 1030-1033 (DSDD) are CA2-binding. Serine 1034 and serine 1044 each carry phosphoserine. The segment at 1057 to 1059 (FLS) is required for basolateral targeting. Basic and acidic residues predominate over residues 1062–1079 (KPSDRERSPTFLERHTSC). At serine 1069 the chain carries Phosphoserine.

Belongs to the anion exchanger (TC 2.A.31) family. As to quaternary structure, homodimer. Interacts with CA2/carbonic anhydrase 2 and CA4/carbonic anhydrase 4 which may regulate transporter activity. Isoform 1 but not isoform 2 interacts with AHCYL1 (via PEST domain when phosphorylated); the interaction increases SLC4A4 isoform 1 activity. Interacts with AHCYL2. In terms of processing, phosphorylation of Ser-1026 by PKA increases the binding of CA2 and changes the Na(+):HCO3(-) stoichiometry of the transporter from 3:1 to 2:1. Phosphorylated in presence of STK39 and dephosphorylated in presence of PP1 phosphatase; phosphorylation seems to inhibit SLC4A4 activity. Post-translationally, N-glycosylated. May not be necessary for the transporter basic functions. Expressed in vas deferens epithelia (at protein level).

The protein resides in the basolateral cell membrane. Its subcellular location is the cell membrane. The enzyme catalyses 2 hydrogencarbonate(out) + Na(+)(out) = 2 hydrogencarbonate(in) + Na(+)(in). The catalysed reaction is 3 hydrogencarbonate(out) + Na(+)(out) = 3 hydrogencarbonate(in) + Na(+)(in). In terms of biological role, electrogenic sodium/bicarbonate cotransporter with a Na(+):HCO3(-) stoichiometry varying from 1:2 to 1:3. May regulate bicarbonate influx/efflux at the basolateral membrane of cells and regulate intracellular pH. This Sus scrofa (Pig) protein is Electrogenic sodium bicarbonate cotransporter 1 (SLC4A4).